We begin with the raw amino-acid sequence, 375 residues long: Succinyl-diaminopimelate desuccinylase (375 aa).

Histidine 66 serves as a coordination point for Zn(2+). Aspartate 68 is a catalytic residue. Position 99 (aspartate 99) interacts with Zn(2+). Glutamate 133 functions as the Proton acceptor in the catalytic mechanism. 3 residues coordinate Zn(2+): glutamate 134, glutamate 162, and histidine 348.

This sequence belongs to the peptidase M20A family. DapE subfamily. In terms of assembly, homodimer. Zn(2+) is required as a cofactor. Co(2+) serves as cofactor.

It carries out the reaction N-succinyl-(2S,6S)-2,6-diaminopimelate + H2O = (2S,6S)-2,6-diaminopimelate + succinate. It functions in the pathway amino-acid biosynthesis; L-lysine biosynthesis via DAP pathway; LL-2,6-diaminopimelate from (S)-tetrahydrodipicolinate (succinylase route): step 3/3. Catalyzes the hydrolysis of N-succinyl-L,L-diaminopimelic acid (SDAP), forming succinate and LL-2,6-diaminopimelate (DAP), an intermediate involved in the bacterial biosynthesis of lysine and meso-diaminopimelic acid, an essential component of bacterial cell walls. This Salmonella typhi protein is Succinyl-diaminopimelate desuccinylase.